The chain runs to 227 residues: Cytochrome c oxidase subunit 2 (227 aa).

Over 1–14 (MAYPHQLGFQDATS) the chain is Mitochondrial intermembrane. The chain crosses the membrane as a helical span at residues 15 to 45 (PIMEELLSFHDHTLMIVFLISSLVLYLISLM). At 46–59 (LTTKLTHTSTMDAQ) the chain is on the mitochondrial matrix side. The chain crosses the membrane as a helical span at residues 60–87 (EVETVWTILPAIILIMIALPSLRILYMM). The Mitochondrial intermembrane segment spans residues 88–227 (DEINNPLLTV…SFENWTTSMT (140 aa)). Cu cation contacts are provided by His161, Cys196, Glu198, Cys200, His204, and Met207. Glu198 is a Mg(2+) binding site.

The protein belongs to the cytochrome c oxidase subunit 2 family. Component of the cytochrome c oxidase (complex IV, CIV), a multisubunit enzyme composed of 14 subunits. The complex is composed of a catalytic core of 3 subunits MT-CO1, MT-CO2 and MT-CO3, encoded in the mitochondrial DNA, and 11 supernumerary subunits COX4I, COX5A, COX5B, COX6A, COX6B, COX6C, COX7A, COX7B, COX7C, COX8 and NDUFA4, which are encoded in the nuclear genome. The complex exists as a monomer or a dimer and forms supercomplexes (SCs) in the inner mitochondrial membrane with NADH-ubiquinone oxidoreductase (complex I, CI) and ubiquinol-cytochrome c oxidoreductase (cytochrome b-c1 complex, complex III, CIII), resulting in different assemblies (supercomplex SCI(1)III(2)IV(1) and megacomplex MCI(2)III(2)IV(2)). Found in a complex with TMEM177, COA6, COX18, COX20, SCO1 and SCO2. Interacts with TMEM177 in a COX20-dependent manner. Interacts with COX20. Interacts with COX16. The cofactor is Cu cation.

It localises to the mitochondrion inner membrane. The catalysed reaction is 4 Fe(II)-[cytochrome c] + O2 + 8 H(+)(in) = 4 Fe(III)-[cytochrome c] + 2 H2O + 4 H(+)(out). In terms of biological role, component of the cytochrome c oxidase, the last enzyme in the mitochondrial electron transport chain which drives oxidative phosphorylation. The respiratory chain contains 3 multisubunit complexes succinate dehydrogenase (complex II, CII), ubiquinol-cytochrome c oxidoreductase (cytochrome b-c1 complex, complex III, CIII) and cytochrome c oxidase (complex IV, CIV), that cooperate to transfer electrons derived from NADH and succinate to molecular oxygen, creating an electrochemical gradient over the inner membrane that drives transmembrane transport and the ATP synthase. Cytochrome c oxidase is the component of the respiratory chain that catalyzes the reduction of oxygen to water. Electrons originating from reduced cytochrome c in the intermembrane space (IMS) are transferred via the dinuclear copper A center (CU(A)) of subunit 2 and heme A of subunit 1 to the active site in subunit 1, a binuclear center (BNC) formed by heme A3 and copper B (CU(B)). The BNC reduces molecular oxygen to 2 water molecules using 4 electrons from cytochrome c in the IMS and 4 protons from the mitochondrial matrix. This chain is Cytochrome c oxidase subunit 2 (MT-CO2), found in Georychus capensis (Cape mole rat).